A 396-amino-acid polypeptide reads, in one-letter code: S-adenosylmethionine synthase (396 aa).

Position 14 (His14) interacts with ATP. Residue Asp16 coordinates Mg(2+). Residue Glu42 coordinates K(+). The L-methionine site is built by Glu55 and Gln98. The flexible loop stretch occupies residues 98-108 (QSPDIAQGVHG). Residues 167 to 169 (DAK), 234 to 235 (RF), Asp243, 249 to 250 (RK), Ser266, and Lys270 each bind ATP. Residue Asp243 participates in L-methionine binding. Position 274 (Lys274) interacts with L-methionine.

The protein belongs to the AdoMet synthase family. Homotetramer; dimer of dimers. It depends on Mg(2+) as a cofactor. Requires K(+) as cofactor.

It is found in the cytoplasm. The catalysed reaction is L-methionine + ATP + H2O = S-adenosyl-L-methionine + phosphate + diphosphate. It functions in the pathway amino-acid biosynthesis; S-adenosyl-L-methionine biosynthesis; S-adenosyl-L-methionine from L-methionine: step 1/1. In terms of biological role, catalyzes the formation of S-adenosylmethionine (AdoMet) from methionine and ATP. The overall synthetic reaction is composed of two sequential steps, AdoMet formation and the subsequent tripolyphosphate hydrolysis which occurs prior to release of AdoMet from the enzyme. The chain is S-adenosylmethionine synthase from Treponema pallidum (strain Nichols).